A 1264-amino-acid chain; its full sequence is P-type sodium-transporting ATPase4 (1264 aa).

Polar residues predominate over residues 1 to 12; that stretch reads MSSQNNNKQGGQ. The disordered stretch occupies residues 1 to 102; the sequence is MSSQNNNKQG…INGEKNDDNN (102 aa). Basic and acidic residues-rich tracts occupy residues 15-42 and 50-64; these read NNKK…DELN and NDMK…KKNE. Helical transmembrane passes span 165 to 185, 186 to 206, 359 to 379, 393 to 413, 923 to 943, 1006 to 1026, 1203 to 1223, and 1226 to 1246; these read VWLI…LVAA, VASL…IVTL, GLIG…AVII, FVII…GLPM, FVCF…VAIV, IFEA…CTGF, CSIS…TSIL, and TCLL…NLFL.

Belongs to the cation transport ATPase (P-type) (TC 3.A.3) family.

It is found in the cell membrane. It catalyses the reaction Na(+)(in) + ATP + H2O = Na(+)(out) + ADP + phosphate + H(+). Its activity is regulated as follows. Inhibited by cipargamin and other spiroindolone compounds. Inhibited by 4-cyano-3-methylisoquinoline derivatives MB14 and MB10 but not RK18. Inhibited by (+)-SJ733, a dihydroisoquinolone compound. In terms of biological role, sodium-exporting ATPase. Required for the extrusion of Na(+) from the intraerythrocytic parasites to maintain a low cytosolic concentration of Na(+). In Plasmodium falciparum (isolate 3D7), this protein is P-type sodium-transporting ATPase4.